Reading from the N-terminus, the 242-residue chain is Probable transcriptional regulatory protein BTH_I1015 (242 aa).

It belongs to the TACO1 family.

It is found in the cytoplasm. This Burkholderia thailandensis (strain ATCC 700388 / DSM 13276 / CCUG 48851 / CIP 106301 / E264) protein is Probable transcriptional regulatory protein BTH_I1015.